Reading from the N-terminus, the 110-residue chain is Protein C-ets-2 (110 aa).

The segment at residues 1-84 is a DNA-binding region (ETS); the sequence is SGPIQLWQFL…AGKRYVYRFV (84 aa).

Belongs to the ETS family.

It localises to the nucleus. Probable transcription factor. The chain is Protein C-ets-2 (ETS-2) from Lytechinus variegatus (Green sea urchin).